Consider the following 258-residue polypeptide: Bidirectional sugar transporter SWEET7 (258 aa).

Residues 1–11 (MVFAHLNLLRK) are Extracellular-facing. The chain crosses the membrane as a helical span at residues 12-32 (IVGIIGNFIALCLFLSPTPTF). Positions 12 to 100 (IVGIIGNFIA…IFFVYCGRQK (89 aa)) constitute a MtN3/slv 1 domain. Topologically, residues 33-46 (VRIVKKKSVEEYSP) are cytoplasmic. Residues 47-67 (IPYLATLINCLVWVLYGLPTV) form a helical membrane-spanning segment. Topologically, residues 68 to 73 (HPDSTL) are extracellular. Residues 74–94 (VITINGTGILIEIVFLTIFFV) traverse the membrane as a helical segment. The Cytoplasmic segment spans residues 95–102 (YCGRQKQR). A helical transmembrane segment spans residues 103 to 123 (LIISAVIAAETAFIAILAVLV). The Extracellular segment spans residues 124–134 (LTLQHTTEKRT). Residues 135–155 (MSVGIVCCVFNVMMYASPLSV) form a helical membrane-spanning segment. The region spanning 136–221 (SVGIVCCVFN…LYGAYYKSTK (86 aa)) is the MtN3/slv 2 domain. Over 156-166 (MKMVIKTKSVE) the chain is Cytoplasmic. The helical transmembrane segment at 167–187 (FMPFWLSVAGFLNAGVWTIYA) threads the bilayer. Topologically, residues 188 to 193 (LMPFDP) are extracellular. Residues 194-214 (FMAIPNGIGCLFGLAQLILYG) form a helical membrane-spanning segment. Residues 215 to 258 (AYYKSTKRIMAERENQPGYVGLSSAIARTGSEKTANTNQEPNNV) are Cytoplasmic-facing.

The protein belongs to the SWEET sugar transporter family. In terms of assembly, forms heterooligomers with SWEET8, SWEET11, SWEET13, SWEET16 and SWEET17.

The protein localises to the cell membrane. Mediates both low-affinity uptake and efflux of sugar across the plasma membrane. This is Bidirectional sugar transporter SWEET7 from Arabidopsis thaliana (Mouse-ear cress).